Here is a 276-residue protein sequence, read N- to C-terminus: Large ribosomal subunit protein uL2 (276 aa).

Residues 224-276 (AMNPIDHPHGGGEGKTSGGRNPVTPWGVPTKGKKTRKRNKSSNKYIKRVSDKG) are disordered. Residues 254–270 (KGKKTRKRNKSSNKYIK) show a composition bias toward basic residues.

This sequence belongs to the universal ribosomal protein uL2 family. Part of the 50S ribosomal subunit. Forms a bridge to the 30S subunit in the 70S ribosome.

One of the primary rRNA binding proteins. Required for association of the 30S and 50S subunits to form the 70S ribosome, for tRNA binding and peptide bond formation. It has been suggested to have peptidyltransferase activity; this is somewhat controversial. Makes several contacts with the 16S rRNA in the 70S ribosome. This is Large ribosomal subunit protein uL2 from Ehrlichia chaffeensis (strain ATCC CRL-10679 / Arkansas).